Consider the following 430-residue polypeptide: Probable sulfoacetate transporter SauU (430 aa).

10 helical membrane passes run 47-67 (LGLV…LGGW), 83-103 (LIWG…ILVV), 142-162 (FARL…AAAG), 165-185 (EAFI…AFFF), 228-248 (WLVT…LTWL), 263-283 (LALF…LGGV), 301-321 (AVLF…TFTA), 327-347 (VILL…LWSL), 362-382 (MMNT…GYLI), and 390-410 (LPFM…LFIN).

Belongs to the major facilitator superfamily.

The protein localises to the cell membrane. May transport sulfoacetate into the cell. The chain is Probable sulfoacetate transporter SauU (sauU) from Cupriavidus necator (strain ATCC 17699 / DSM 428 / KCTC 22496 / NCIMB 10442 / H16 / Stanier 337) (Ralstonia eutropha).